We begin with the raw amino-acid sequence, 278 residues long: Undecaprenyl-diphosphatase 1 (278 aa).

Helical transmembrane passes span 45-65, 95-115, 119-139, 191-211, 225-245, and 256-276; these read AVIG…LVYF, WWVI…KPLI, LASL…MWWA, VAAT…AGLY, PLAV…AWLL, and FVVY…TGVL.

The protein belongs to the UppP family.

Its subcellular location is the cell membrane. It catalyses the reaction di-trans,octa-cis-undecaprenyl diphosphate + H2O = di-trans,octa-cis-undecaprenyl phosphate + phosphate + H(+). Its function is as follows. Catalyzes the dephosphorylation of undecaprenyl diphosphate (UPP). Confers resistance to bacitracin. This Streptomyces coelicolor (strain ATCC BAA-471 / A3(2) / M145) protein is Undecaprenyl-diphosphatase 1.